A 436-amino-acid polypeptide reads, in one-letter code: Elongation factor 1-alpha (436 aa).

The tr-type G domain occupies 8-232 (KPHLNMIVTG…DDFKMAEKPV (225 aa)). A G1 region spans residues 17–24 (GHIDNGKS). 17 to 24 (GHIDNGKS) is a GTP binding site. Mg(2+) is bound at residue serine 24. The G2 stretch occupies residues 74 to 78 (GITID). A G3 region spans residues 95 to 98 (DAPG). Residues 95–99 (DAPGH) and 157–160 (NKMD) contribute to the GTP site. The G4 stretch occupies residues 157-160 (NKMD). The interval 196 to 198 (SGW) is G5.

The protein belongs to the TRAFAC class translation factor GTPase superfamily. Classic translation factor GTPase family. EF-Tu/EF-1A subfamily.

The protein localises to the cytoplasm. It carries out the reaction GTP + H2O = GDP + phosphate + H(+). Functionally, GTP hydrolase that promotes the GTP-dependent binding of aminoacyl-tRNA to the A-site of ribosomes during protein biosynthesis. This Cenarchaeum symbiosum (strain A) protein is Elongation factor 1-alpha.